The sequence spans 303 residues: Bidirectional sugar transporter SWEET14 (303 aa).

Residues 1–9 (MAGMSLQHP) are Extracellular-facing. The helical transmembrane segment at 10-30 (WAFAFGLLGNIISFMTYLAPL) threads the bilayer. The MtN3/slv 1 domain occupies 13–98 (AFGLLGNIIS…AVYLVYAPKK (86 aa)). Residues 31–44 (PTFYRIYKSKSTQG) lie on the Cytoplasmic side of the membrane. The helical transmembrane segment at 45 to 65 (FQSVPYVVALFSAMLWIYYAL) threads the bilayer. Over 66-72 (LKSDECL) the chain is Extracellular. The chain crosses the membrane as a helical span at residues 73–93 (LITINSAGCVIETIYIAVYLV). Residues 94-105 (YAPKKAKMFTAK) are Cytoplasmic-facing. The chain crosses the membrane as a helical span at residues 106 to 126 (LLLLVNVGVFGLILLLTLLLS). Over 127-133 (AGDRRIV) the chain is Extracellular. Residues 134 to 154 (VLGWVCVGFSVSVFVAPLSII) traverse the membrane as a helical segment. In terms of domain architecture, MtN3/slv 2 spans 134-217 (VLGWVCVGFS…MGLYAMYRNS (84 aa)). The Cytoplasmic portion of the chain corresponds to 155-167 (RLVVRTKSVEFMP). Residues 168-188 (FSLSFSLTISAVVWFLYGLLI) traverse the membrane as a helical segment. The Extracellular segment spans residues 189 to 192 (KDKY). Residues 193–213 (VALPNVLGFSFGVIQMGLYAM) form a helical membrane-spanning segment. The Cytoplasmic segment spans residues 214 to 303 (YRNSTPKAVL…AGAGEKKVAA (90 aa)). The disordered stretch occupies residues 266–290 (HPVDVESPPAEAPPEEDDKAAAATA).

Belongs to the SWEET sugar transporter family. Forms homooligomers and/or heterooligomers.

The protein localises to the cell membrane. Mediates both low-affinity uptake and efflux of sugar across the plasma membrane. Functionally, confers blight susceptibility. Confers TAL effector-mediated susceptibility to Xanthomonas oryzae pv. oryzae. The protein is Bidirectional sugar transporter SWEET14 (SWEET14) of Oryza sativa subsp. japonica (Rice).